Consider the following 423-residue polypeptide: MDIDQYMTDLGRRARHASRAMARASTAAKNAALEAVAVAIEREADTLRQANARDLARARDKGHDAAFIDRLTLSDKALKTMVEGLRQVAALADPIGEISNLKFRPSGIQVGQMRVPLGVIGIIYESRPNVTIDAAALCLKSGNATILRGGSEALECNTALARLIGEGLDKAGLPQEAVQVVETSDRAAVGKLITMTDYVDVIVPRGGKSLIARLMEESRVPMIKHLDGICHVYVDDRADVAKALNVCDNAKTHRYGTCNTMETLLVARGIAAHVLPALGKLYREKEVELRVDSAARAVLTEAGVAPLVDATEEDWRTEYLAPVLAVKVVDGIDDAIGHINEYGSHHTDAIVTEDHDRAMRFLREVDSASVMVNASTRFADGFEFGLGAEIGISNDKLHARGPVGLEGLTSLKYVVLGHGEGRQ.

Belongs to the gamma-glutamyl phosphate reductase family.

It localises to the cytoplasm. The catalysed reaction is L-glutamate 5-semialdehyde + phosphate + NADP(+) = L-glutamyl 5-phosphate + NADPH + H(+). Its pathway is amino-acid biosynthesis; L-proline biosynthesis; L-glutamate 5-semialdehyde from L-glutamate: step 2/2. In terms of biological role, catalyzes the NADPH-dependent reduction of L-glutamate 5-phosphate into L-glutamate 5-semialdehyde and phosphate. The product spontaneously undergoes cyclization to form 1-pyrroline-5-carboxylate. This Paraburkholderia phymatum (strain DSM 17167 / CIP 108236 / LMG 21445 / STM815) (Burkholderia phymatum) protein is Gamma-glutamyl phosphate reductase.